A 431-amino-acid polypeptide reads, in one-letter code: Divergent protein kinase domain 1B (431 aa).

Residues 1 to 30 lie on the Cytoplasmic side of the membrane; the sequence is MRRLRRLVHLVLLCPFSKGLQGRLPGLRVK. Residues 5 to 6 carry the May mediate ER retention motif; that stretch reads RR. Residues 31–51 traverse the membrane as a helical segment; that stretch reads YVLLVWLGIFVGSWMVYVHYS. Residues 52–431 lie on the Lumenal side of the membrane; the sequence is SYSELCRGHV…WREISNTNYS (380 aa). 2 disulfides stabilise this stretch: cysteine 57–cysteine 94 and cysteine 62–cysteine 117.

It belongs to the DIPK family. Among the many cysteines in the lumenal domain, most are probably involved in disulfide bonds. In terms of tissue distribution, expressed in kidney, testis, lung, heart, stomach, intestine, pancreas, liver and salivary gland. Strongly expressed in acute pancreatitis, brain, and in peripheral endothelial cells.

The protein resides in the endoplasmic reticulum membrane. The protein is Divergent protein kinase domain 1B (Dipk1b) of Mus musculus (Mouse).